Here is a 290-residue protein sequence, read N- to C-terminus: Protein-glutamine deamidase Cif (290 aa).

The interval 1 to 26 (MKISPNTISPSQSDPRMSTNVSQRSR) is disordered. Catalysis depends on residues Cys117, His173, and Gln193.

This sequence belongs to the Cif family.

It is found in the secreted. The protein localises to the host nucleus. The catalysed reaction is L-glutaminyl-[protein] + H2O = L-glutamyl-[protein] + NH4(+). Its function is as follows. Protein-glutamine deamidase effector that inhibits the host cell cycle and other key cellular processes such as the actin network and programmed-cell death. Acts by mediating the side chain deamidation of 'Gln-40' of host NEDD8, converting it to glutamate, thereby abolishing the activity of cullin-RING-based E3 ubiquitin-protein ligase complexes (CRL complexes). Inactivation of CRL complexes prevents ubiquitination and subsequent degradation of the cyclin-dependent kinase inhibitors CDKN1A/p21 and CDKN1B/p27, leading to G1 and G2 cell cycle arrests in host cells. Also able to catalyze deamidation of 'Gln-40' of host ubiquitin in vitro; however, NEDD8 constitutes the preferred substrate in vivo. This is Protein-glutamine deamidase Cif from Yersinia pseudotuberculosis serotype O:3 (strain YPIII).